The chain runs to 1048 residues: Probable beta-glucosidase E (1048 aa).

Residues 1–54 (MPPPPFRDAPSSAKSSQRYTPLHESIPEELNDKQYSSDADSLPLSDPSDGEDDS) are disordered. The Cytoplasmic portion of the chain corresponds to 1–150 (MPPPPFRDAP…WRTVYYSKYW (150 aa)). Residues 36 to 47 (SSDADSLPLSDP) are compositionally biased toward low complexity. Residues 151–171 (WRALIGVVVVLVLLVLVFLGL) traverse the membrane as a helical; Signal-anchor for type II membrane protein segment. The Extracellular portion of the chain corresponds to 172–1048 (ARSKQVGDEL…SRDLPLHGKY (877 aa)). N-linked (GlcNAc...) asparagine glycans are attached at residues Asn216, Asn224, and Asn410. Asp438 is an active-site residue. N-linked (GlcNAc...) asparagine glycosylation is found at Asn481, Asn520, Asn578, Asn895, and Asn991. The tract at residues 508-527 (WERPPPDGEGGPNFSSWTDD) is disordered.

It belongs to the glycosyl hydrolase 3 family.

The protein resides in the cell membrane. It catalyses the reaction Hydrolysis of terminal, non-reducing beta-D-glucosyl residues with release of beta-D-glucose.. Its pathway is glycan metabolism; cellulose degradation. Its function is as follows. Beta-glucosidases are one of a number of cellulolytic enzymes involved in the degradation of cellulosic biomass. Catalyzes the last step releasing glucose from the inhibitory cellobiose. This is Probable beta-glucosidase E (bglE) from Aspergillus oryzae (strain ATCC 42149 / RIB 40) (Yellow koji mold).